A 254-amino-acid chain; its full sequence is Alcohol dehydrogenase 2 (254 aa).

10–33 contacts NAD(+); that stretch reads FVAGLGGIGFDTSREIVKRGPKNL. Ser138 is a substrate binding site. Tyr151 serves as the catalytic Proton acceptor.

This sequence belongs to the short-chain dehydrogenases/reductases (SDR) family. As to quaternary structure, homodimer.

The enzyme catalyses a primary alcohol + NAD(+) = an aldehyde + NADH + H(+). The catalysed reaction is a secondary alcohol + NAD(+) = a ketone + NADH + H(+). This chain is Alcohol dehydrogenase 2 (Adh2), found in Drosophila mojavensis (Fruit fly).